Here is a 403-residue protein sequence, read N- to C-terminus: Ubiquitin-like modifier-activating enzyme 5 (403 aa).

Positions 81, 102, 125, 148, and 182 each coordinate ATP. 2 residues coordinate Zn(2+): cysteine 224 and cysteine 227. Cysteine 248 functions as the Glycyl thioester intermediate in the catalytic mechanism. 2 residues coordinate Zn(2+): cysteine 301 and cysteine 306. The segment covering 306 to 315 (CRKQQEEYKK) has biased composition (basic and acidic residues). The interval 306–337 (CRKQQEEYKKRAPAQPTQETAPQEEEEVVHED) is disordered. Residues 333 to 345 (VVHEDNEWGIELV) carry the UFM1-interacting sequence (UIS) motif. A linker region spans residues 346-376 (SEVSEEELKNSSGPVPTLPEGITVAYTVPKK). Phosphoserine occurs at positions 357 and 392. Residues 388–403 (DSGESLEDLMARMKKM) carry the UFC1-binding sequence (UFC) motif.

This sequence belongs to the ubiquitin-activating E1 family. UBA5 subfamily. In terms of assembly, homodimer; homodimerization is required for UFM1 activation. Interacts (via UIS motif) with UFM1; binds UFM1 via a trans-binding mechanism in which UFM1 interacts with distinct sites in both subunits of the UBA5 homodimer. Interacts (via C-terminus) with UFC1. Interacts (via UIS motif) with GABARAPL2 and, with lower affinity, with GABARAP and GABARAPL1.

Its subcellular location is the cytoplasm. The protein resides in the nucleus. The protein localises to the endoplasmic reticulum membrane. It localises to the golgi apparatus. Functionally, E1-like enzyme which specifically catalyzes the first step in ufmylation. Activates UFM1 by first adenylating its C-terminal glycine residue with ATP, and thereafter linking this residue to the side chain of a cysteine residue in E1, yielding a UFM1-E1 thioester and free AMP. Activates UFM1 via a trans-binding mechanism, in which UFM1 interacts with distinct sites in both subunits of the UBA5 homodimer. Trans-binding also promotes stabilization of the UBA5 homodimer, and enhances ATP-binding. Transfer of UFM1 from UBA5 to the E2-like enzyme UFC1 also takes place using a trans mechanism. Ufmylation plays a key role in various processes, such as ribosome recycling, response to DNA damage, interferon response or reticulophagy (also called ER-phagy). Ufmylation is essential for erythroid differentiation of both megakaryocytes and erythrocytes. The sequence is that of Ubiquitin-like modifier-activating enzyme 5 from Rattus norvegicus (Rat).